Reading from the N-terminus, the 415-residue chain is Serine/threonine transporter SstT (415 aa).

A run of 9 helical transmembrane segments spans residues 21–41 (ILLG…AALA), 45–65 (LGTL…LMLV), 83–103 (ILFL…VLSV), 142–162 (ALLN…GLAF), 193–213 (LGIF…ALWG), 217–237 (LLMV…PLIV), 299–319 (MAGA…TLGI), 331–351 (VVAS…LLLI), and 358–378 (FGIS…IGVL).

This sequence belongs to the dicarboxylate/amino acid:cation symporter (DAACS) (TC 2.A.23) family.

It is found in the cell inner membrane. It carries out the reaction L-serine(in) + Na(+)(in) = L-serine(out) + Na(+)(out). It catalyses the reaction L-threonine(in) + Na(+)(in) = L-threonine(out) + Na(+)(out). Functionally, involved in the import of serine and threonine into the cell, with the concomitant import of sodium (symport system). The protein is Serine/threonine transporter SstT of Pectobacterium carotovorum subsp. carotovorum (strain PC1).